Reading from the N-terminus, the 306-residue chain is Nucleotide-binding protein amb4396 (306 aa).

Positions 1 to 14 (MSDLHSSPTDQTSA) are enriched in polar residues. The tract at residues 1–20 (MSDLHSSPTDQTSAPAHAGG) is disordered. 29-36 (GMSGAGKT) is a binding site for ATP. Position 77-80 (77-80 (DIRT)) interacts with GTP.

The protein belongs to the RapZ-like family.

Its function is as follows. Displays ATPase and GTPase activities. The sequence is that of Nucleotide-binding protein amb4396 from Paramagnetospirillum magneticum (strain ATCC 700264 / AMB-1) (Magnetospirillum magneticum).